The chain runs to 55 residues: Large ribosomal subunit protein bL33 (55 aa).

It belongs to the bacterial ribosomal protein bL33 family.

This chain is Large ribosomal subunit protein bL33, found in Micrococcus luteus (strain ATCC 4698 / DSM 20030 / JCM 1464 / CCM 169 / CCUG 5858 / IAM 1056 / NBRC 3333 / NCIMB 9278 / NCTC 2665 / VKM Ac-2230) (Micrococcus lysodeikticus).